Here is a 245-residue protein sequence, read N- to C-terminus: MQAIAIIAASGVGKRMKLPSGKTKQYLKLGVYPVIYYALSAFQQASSVEAIFVATLPSHIAYLQKMARRYGFHKVKFVIEGGKERQDSIFNCVEKIREVYGDDGALQDKVILIHDGVRPFIQPNEIDEIAELSKSFGACVPATKPKDTIKYIDGDDNRFFGETLDRSKLLQVQTPQGFRADLIMSAHQKAQSDSFYATDDAALTEAYFPEQKIKIFEMGYHNIKITTPEDMDLGKAILKRLRQSK.

Belongs to the IspD/TarI cytidylyltransferase family. IspD subfamily.

It carries out the reaction 2-C-methyl-D-erythritol 4-phosphate + CTP + H(+) = 4-CDP-2-C-methyl-D-erythritol + diphosphate. The protein operates within isoprenoid biosynthesis; isopentenyl diphosphate biosynthesis via DXP pathway; isopentenyl diphosphate from 1-deoxy-D-xylulose 5-phosphate: step 2/6. In terms of biological role, catalyzes the formation of 4-diphosphocytidyl-2-C-methyl-D-erythritol from CTP and 2-C-methyl-D-erythritol 4-phosphate (MEP). The chain is 2-C-methyl-D-erythritol 4-phosphate cytidylyltransferase from Chloroherpeton thalassium (strain ATCC 35110 / GB-78).